Reading from the N-terminus, the 144-residue chain is 3-dehydroquinate dehydratase (144 aa).

Tyrosine 24 acts as the Proton acceptor in catalysis. Positions 73, 79, and 86 each coordinate substrate. The active-site Proton donor is histidine 99. Residues 100–101 and arginine 110 contribute to the substrate site; that span reads LS.

The protein belongs to the type-II 3-dehydroquinase family. In terms of assembly, homododecamer.

The enzyme catalyses 3-dehydroquinate = 3-dehydroshikimate + H2O. It participates in metabolic intermediate biosynthesis; chorismate biosynthesis; chorismate from D-erythrose 4-phosphate and phosphoenolpyruvate: step 3/7. In terms of biological role, catalyzes a trans-dehydration via an enolate intermediate. This chain is 3-dehydroquinate dehydratase, found in Shewanella sp. (strain MR-4).